We begin with the raw amino-acid sequence, 182 residues long: Fatty-acid and retinol-binding protein 1 (182 aa).

An N-terminal signal peptide occupies residues 1-17 (MIRATIILAAVAALAFS). The stretch at 86–106 (EKASKLHQIVKDKVNALNDEA) forms a coiled coil.

This sequence belongs to the fatty-acid and retinol-binding protein (FARBP) family.

It is found in the secreted. Its function is as follows. Probably binds lipids. The chain is Fatty-acid and retinol-binding protein 1 (far-1) from Caenorhabditis elegans.